We begin with the raw amino-acid sequence, 610 residues long: Glutamine--fructose-6-phosphate aminotransferase [isomerizing] (610 aa).

Cys-2 functions as the Nucleophile; for GATase activity in the catalytic mechanism. The Glutamine amidotransferase type-2 domain maps to 2–218 (CGIVGAVAQR…EGDVAEITRR (217 aa)). SIS domains are found at residues 286 to 426 (AVEI…QQNR) and 459 to 600 (LAPD…VDQP). Residue Lys-605 is the For Fru-6P isomerization activity of the active site.

In terms of assembly, homodimer.

It localises to the cytoplasm. The catalysed reaction is D-fructose 6-phosphate + L-glutamine = D-glucosamine 6-phosphate + L-glutamate. Functionally, catalyzes the first step in hexosamine metabolism, converting fructose-6P into glucosamine-6P using glutamine as a nitrogen source. The polypeptide is Glutamine--fructose-6-phosphate aminotransferase [isomerizing] (Aliivibrio fischeri (strain ATCC 700601 / ES114) (Vibrio fischeri)).